The chain runs to 337 residues: 1-aminocyclopropane-1-carboxylate deaminase (337 aa).

Position 50 is an N6-(pyridoxal phosphate)lysine (lysine 50). Residue serine 77 is the Nucleophile of the active site.

It belongs to the ACC deaminase/D-cysteine desulfhydrase family. As to quaternary structure, homotrimer. Pyridoxal 5'-phosphate serves as cofactor.

It carries out the reaction 1-aminocyclopropane-1-carboxylate + H2O = 2-oxobutanoate + NH4(+). Functionally, catalyzes a cyclopropane ring-opening reaction, the irreversible conversion of 1-aminocyclopropane-1-carboxylate (ACC) to ammonia and alpha-ketobutyrate. Allows growth on ACC as a nitrogen source. In Bradyrhizobium diazoefficiens (strain JCM 10833 / BCRC 13528 / IAM 13628 / NBRC 14792 / USDA 110), this protein is 1-aminocyclopropane-1-carboxylate deaminase.